We begin with the raw amino-acid sequence, 713 residues long: Nucleolin (713 aa).

Residues 1-309 form a disordered region; that stretch reads MVKLAKAGKT…QKIEGSEPTT (309 aa). N6-acetyllysine is present on residues lysine 9, lysine 15, and lysine 16. Over residues 24–46 the composition is skewed to acidic residues; the sequence is VEEDSEDEEMSEDEDDSSGEEEV. Phosphoserine is present on residues serine 28, serine 34, serine 40, and serine 41. A compositionally biased stretch (low complexity) spans 56 to 111; sequence ATTTPAKKVVVSQTKKAAVPTPAKKAAVTPGKKAAATPAKKAVTPAKVVPTPGKKG. Residues 58–65 form repeat 1; it reads TTPAKKVV. The tract at residues 58–135 is 8 X 8 AA tandem repeats of X-T-P-X-K-K-X-X; it reads TTPAKKVVVS…GAVTPAKGAK (78 aa). The residue at position 67 (serine 67) is a Phosphoserine. Phosphothreonine occurs at positions 69, 76, 84, and 92. 3 tandem repeats follow at residues 75-82, 83-90, and 91-98. N6-acetyllysine is present on lysine 96. Phosphothreonine is present on threonine 99. Residues 99–104 form a 5; truncated repeat; the sequence is TPAKVV. Residue lysine 102 is modified to N6-acetyllysine. Residues 105–112 form repeat 6; that stretch reads PTPGKKGA. Residue threonine 106 is modified to Phosphothreonine. N6-acetyllysine is present on residues lysine 109 and lysine 116. Repeat copies occupy residues 120–127 and 128–135. Threonine 121 carries the post-translational modification Phosphothreonine. Residue lysine 124 is modified to N6-acetyllysine. 2 positions are modified to phosphoserine: serine 145 and serine 157. The span at 145 to 168 shows a compositional bias: acidic residues; that stretch reads SDEDEDEEDEDDSDEDEDEEDEFE. Positions 169-186 are enriched in low complexity; it reads PPVVKGVKPAKAAPAAPA. Residues serine 187 and serine 213 each carry the phosphoserine modification. Residues 187–218 show a composition bias toward acidic residues; the sequence is SEDEDEEDDDDEDDDDDDEEEEEEDDSEEEVM. Threonine 221 is modified (phosphothreonine). The segment covering 242–275 has biased composition (acidic residues); the sequence is EEEEDDEDDEDEEEDEDEEDEEDDEDEDEEEEEE. Residues 288–304 show a composition bias toward basic and acidic residues; it reads MTKQKEAPEAKKQKIEG. A Glycyl lysine isopeptide (Lys-Gly) (interchain with G-Cter in SUMO1); alternate cross-link involves residue lysine 301. Residue lysine 301 forms a Glycyl lysine isopeptide (Lys-Gly) (interchain with G-Cter in SUMO2); alternate linkage. A Phosphoserine modification is found at serine 305. RRM domains are found at residues 311–387 and 397–470; these read FNLF…KPKG and RTLL…YTGE. Position 322 is an N6-acetyllysine (lysine 322). A Glycyl lysine isopeptide (Lys-Gly) (interchain with G-Cter in SUMO1); alternate cross-link involves residue lysine 328. Residue lysine 328 forms a Glycyl lysine isopeptide (Lys-Gly) (interchain with G-Cter in SUMO2); alternate linkage. Lysine 352 is modified (N6-acetyllysine). Phosphoserine is present on serine 360. Position 371 is a phosphothreonine (threonine 371). Lysine 374 is covalently cross-linked (Glycyl lysine isopeptide (Lys-Gly) (interchain with G-Cter in SUMO2)). Residue lysine 381 forms a Glycyl lysine isopeptide (Lys-Gly) (interchain with G-Cter in SUMO2); alternate linkage. At lysine 381 the chain carries N6-acetyllysine; alternate. An N6-acetyllysine modification is found at lysine 402. Serine 405 carries the post-translational modification Phosphoserine. Threonine 409 bears the Phosphothreonine mark. Position 448 is an N6-acetyllysine (lysine 448). A phosphoserine mark is found at serine 462 and serine 464. 2 positions are modified to N6-acetyllysine: lysine 471 and lysine 480. The RRM 3 domain maps to 489-563; sequence KTLVLSNLSY…RTIRLELQGP (75 aa). Residue lysine 516 forms a Glycyl lysine isopeptide (Lys-Gly) (interchain with G-Cter in SUMO2); alternate linkage. An N6-acetyllysine; alternate modification is found at lysine 516. Position 524 is an N6-acetyllysine (lysine 524). Serine 566 carries the phosphoserine modification. Lysine 575 carries the N6-acetyllysine modification. An RRM 4 domain is found at 575-650; sequence KTLFVKGLSE…NKVTLDWAKP (76 aa). Residue lysine 580 forms a Glycyl lysine isopeptide (Lys-Gly) (interchain with G-Cter in SUMO2); alternate linkage. Residue lysine 580 is modified to N6-acetyllysine; alternate. At serine 583 the chain carries Phosphoserine. A Glycyl lysine isopeptide (Lys-Gly) (interchain with G-Cter in SUMO1); alternate cross-link involves residue lysine 592. Lysine 592 is covalently cross-linked (Glycyl lysine isopeptide (Lys-Gly) (interchain with G-Cter in SUMO2); alternate). Phosphoserine is present on residues serine 594 and serine 622. Lysine 627 is covalently cross-linked (Glycyl lysine isopeptide (Lys-Gly) (interchain with G-Cter in SUMO2)). A disordered region spans residues 645–713; sequence LDWAKPKGEG…KPQGKKTKFE (69 aa). An N6-acetyllysine modification is found at lysine 649. A compositionally biased stretch (gly residues) spans 653–702; that stretch reads EGGFGGRGGGRGGFGGRGGGRGGRGGFGGRGRGGFGGRGGFRGGRGGGGD. Asymmetric dimethylarginine occurs at positions 659, 663, 669, 673, 676, 682, 684, 690, and 694. Arginine 697 carries the post-translational modification Asymmetric dimethylarginine; alternate. The residue at position 697 (arginine 697) is an Omega-N-methylarginine; alternate.

As to quaternary structure, identified in a IGF2BP1-dependent mRNP granule complex containing untranslated mRNAs. Component of the SWAP complex that consists of NPM1, NCL/nucleolin, PARP1 and SWAP70. Component of a complex which is at least composed of HTATSF1/Tat-SF1, the P-TEFb complex components CDK9 and CCNT1, RNA polymerase II, SUPT5H, and NCL/nucleolin. Interacts with AICDA. Interacts with APTX. Interacts with C1QBP. Interacts with ERBB4. Interacts (via C-terminus) with FMR1 isoform 6 (via N-terminus). Interacts with GZF1; this interaction is important for nucleolar localization of GZF1. Interacts with NSUN2. Interacts with NVL. Interacts (via N-terminus domain) with SETX. Interacts (via RRM1 and C-terminal RRM4/Arg/Gly-rich domains) with TERT; the interaction is important for nucleolar localization of TERT. Interacts with WDR46. Interacts with ZFP36. Interacts with LRRC34. Interacts with RRP1B. Interacts with HNRNPU; this interaction occurs during mitosis. Interacts with RIOK1; RIOK1 recruits NCL to PRMT5 for symmetrically methylation. Interacts with ZBTB7B. Interacts with MDK; this interaction promotes NCL clustering and lateral movements of this complex into lipid rafts leading to MDK internalization. Interacts with HDGF. Interacts with ALKBH2. Interacts with IGFBP5; this interaction is necessary for IGFBP5 localization to the nucleus. Interacts with DDX24 (when ubiquitinated); this interaction may be important during ribosome biogenesis. Some glutamate residues are glycylated by TTLL8. This modification occurs exclusively on glutamate residues and results in a glycine chain on the gamma-carboxyl group. Post-translationally, symmetrically methylated by PRMT5.

It localises to the nucleus. Its subcellular location is the nucleolus. It is found in the cytoplasm. In terms of biological role, nucleolin is the major nucleolar protein of growing eukaryotic cells. It is found associated with intranucleolar chromatin and pre-ribosomal particles. It induces chromatin decondensation by binding to histone H1. It is thought to play a role in pre-rRNA transcription and ribosome assembly. May play a role in the process of transcriptional elongation. Binds RNA oligonucleotides with 5'-UUAGGG-3' repeats more tightly than the telomeric single-stranded DNA 5'-TTAGGG-3' repeats. This chain is Nucleolin (Ncl), found in Rattus norvegicus (Rat).